The sequence spans 62 residues: Overexpressed in colon carcinoma 1 protein homolog (62 aa).

Residues 1–16 (MGCGNSTAGGAGGRGA) are compositionally biased toward gly residues. The segment at 1 to 62 (MGCGNSTAGG…SGQTKAAPKD (62 aa)) is disordered.

The protein belongs to the OCC1 family.

In Gallus gallus (Chicken), this protein is Overexpressed in colon carcinoma 1 protein homolog.